We begin with the raw amino-acid sequence, 276 residues long: Membrane protein insertase YidC 2 (276 aa).

The N-terminal stretch at 1-22 is a signal peptide; sequence MGVKKKLKLTSLLGLSLLIMTA. Residue Cys23 is the site of N-palmitoyl cysteine attachment. The S-diacylglycerol cysteine moiety is linked to residue Cys23. The next 4 helical transmembrane spans lie at 58-78, 130-150, 169-189, and 207-227; these read ISIG…LLPV, SDSL…FQAL, VDTT…STWL, and GIPV…ALYW.

It belongs to the OXA1/ALB3/YidC family. Type 2 subfamily. Interacts with KhpB (also called EloR/Jag).

Its subcellular location is the cell membrane. Required for the insertion and/or proper folding and/or complex formation of integral membrane proteins into the membrane. Involved in integration of membrane proteins that insert both dependently and independently of the Sec translocase complex, as well as at least some lipoproteins. In Streptococcus pneumoniae (strain ATCC BAA-255 / R6), this protein is Membrane protein insertase YidC 2.